The sequence spans 452 residues: Phosphoglucosamine mutase (452 aa).

The active-site Phosphoserine intermediate is Ser104. Residues Ser104, Asp241, Asp243, and Asp245 each contribute to the Mg(2+) site. At Ser104 the chain carries Phosphoserine.

The protein belongs to the phosphohexose mutase family. Mg(2+) is required as a cofactor. In terms of processing, activated by phosphorylation.

The catalysed reaction is alpha-D-glucosamine 1-phosphate = D-glucosamine 6-phosphate. Its function is as follows. Catalyzes the conversion of glucosamine-6-phosphate to glucosamine-1-phosphate. The chain is Phosphoglucosamine mutase from Arthrobacter sp. (strain FB24).